A 473-amino-acid chain; its full sequence is Histidinol dehydrogenase, chloroplastic (473 aa).

A disordered region spans residues methionine 1–leucine 28. NAD(+) is bound by residues tyrosine 162, glutamine 224, and asparagine 247. Residues serine 273, glutamine 295, and histidine 298 each contribute to the substrate site. Glutamine 295 and histidine 298 together coordinate Zn(2+). Catalysis depends on proton acceptor residues glutamate 363 and histidine 364. Substrate is bound by residues histidine 364, aspartate 397, glutamate 451, and histidine 456. Residue aspartate 397 coordinates Zn(2+). Residue histidine 456 coordinates Zn(2+).

This sequence belongs to the histidinol dehydrogenase family. Requires Zn(2+) as cofactor.

Its subcellular location is the plastid. The protein localises to the chloroplast. The enzyme catalyses L-histidinol + 2 NAD(+) + H2O = L-histidine + 2 NADH + 3 H(+). Its pathway is amino-acid biosynthesis; L-histidine biosynthesis; L-histidine from 5-phospho-alpha-D-ribose 1-diphosphate: step 9/9. Its function is as follows. Catalyzes the sequential NAD-dependent oxidations of L-histidinol to L-histidinaldehyde and then to L-histidine. The chain is Histidinol dehydrogenase, chloroplastic (HDH) from Oryza sativa subsp. japonica (Rice).